The chain runs to 206 residues: Ras-related protein Rab-18 (206 aa).

Met-1 is subject to N-acetylmethionine. GTP is bound by residues Ser-17, Gly-20, Lys-21, Ser-22, Ser-23, Asp-34, Pro-35, Thr-40, Gly-66, Lys-123, and Asp-125. Mg(2+) is bound at residue Ser-22. Short sequence motifs (switch) lie at residues 31 to 45 (DTFDPELAATIGVDF) and 63 to 80 (DTAGQERFRTLTPSYYRG). Thr-40 lines the Mg(2+) pocket. Position 144 is a phosphoserine (Ser-144). Ala-152 contributes to the GTP binding site. Cys-199 is lipidated: S-palmitoyl cysteine. Cys-203 carries the cysteine methyl ester modification. Cys-203 is lipidated: S-geranylgeranyl cysteine. Residues 204–206 (SVL) constitute a propeptide, removed in mature form.

It belongs to the small GTPase superfamily. Rab family. As to quaternary structure, interacts (in GTP-bound form) with ZFYVE1. Interacts with ZW10 and this interaction is enhanced in the presence of ZFYVE1. Interacts with BSCL2. The cofactor is Mg(2+).

It localises to the endoplasmic reticulum membrane. Its subcellular location is the golgi apparatus. The protein localises to the cis-Golgi network membrane. The protein resides in the lipid droplet. It is found in the apical cell membrane. The catalysed reaction is GTP + H2O = GDP + phosphate + H(+). Regulated by guanine nucleotide exchange factors (GEFs) which promote the exchange of bound GDP for free GTP. Regulated by GTPase activating proteins (GAPs) which increase the GTP hydrolysis activity at the ER membrane. Inhibited by GDP dissociation inhibitors (GDIs) which prevent Rab-GDP dissociation. In terms of biological role, the small GTPases Rab are key regulators of intracellular membrane trafficking, from the formation of transport vesicles to their fusion with membranes. Rabs cycle between an inactive GDP-bound form and an active GTP-bound form that is able to recruit to membranes different sets of downstream effectors directly responsible for vesicle formation, movement, tethering and fusion. RAB18 is required for the localization of ZFYVE1 to lipid droplets and for its function in mediating the formation of endoplasmic reticulum-lipid droplets (ER-LD) contacts. Also required for maintaining endoplasmic reticulum structure. Plays a role in apical endocytosis/recycling. Plays a key role in eye and brain development and neurodegeneration. The chain is Ras-related protein Rab-18 (RAB18) from Bos taurus (Bovine).